The following is a 208-amino-acid chain: Protein-L-isoaspartate O-methyltransferase (208 aa).

Ser-59 is an active-site residue.

It belongs to the methyltransferase superfamily. L-isoaspartyl/D-aspartyl protein methyltransferase family.

It is found in the cytoplasm. It catalyses the reaction [protein]-L-isoaspartate + S-adenosyl-L-methionine = [protein]-L-isoaspartate alpha-methyl ester + S-adenosyl-L-homocysteine. In terms of biological role, catalyzes the methyl esterification of L-isoaspartyl residues in peptides and proteins that result from spontaneous decomposition of normal L-aspartyl and L-asparaginyl residues. It plays a role in the repair and/or degradation of damaged proteins. This chain is Protein-L-isoaspartate O-methyltransferase, found in Escherichia fergusonii (strain ATCC 35469 / DSM 13698 / CCUG 18766 / IAM 14443 / JCM 21226 / LMG 7866 / NBRC 102419 / NCTC 12128 / CDC 0568-73).